Reading from the N-terminus, the 850-residue chain is DNA polymerase I (850 aa).

Residues 1–288 (MKLVIFDGNS…SIIKRLGLSE (288 aa)) form the 5'-3' exonuclease domain. A polymerase region spans residues 470-850 (VDRDALIQYT…KEGLNWYETK (381 aa)).

The protein belongs to the DNA polymerase type-A family.

The catalysed reaction is DNA(n) + a 2'-deoxyribonucleoside 5'-triphosphate = DNA(n+1) + diphosphate. Functionally, in addition to polymerase activity, this DNA polymerase exhibits 3'-5' and 5'-3' exonuclease activity. The chain is DNA polymerase I (polA) from Caldicellulosiruptor bescii (strain ATCC BAA-1888 / DSM 6725 / KCTC 15123 / Z-1320) (Anaerocellum thermophilum).